Consider the following 261-residue polypeptide: Indole-3-glycerol phosphate synthase (261 aa).

The protein belongs to the TrpC family.

The catalysed reaction is 1-(2-carboxyphenylamino)-1-deoxy-D-ribulose 5-phosphate + H(+) = (1S,2R)-1-C-(indol-3-yl)glycerol 3-phosphate + CO2 + H2O. Its pathway is amino-acid biosynthesis; L-tryptophan biosynthesis; L-tryptophan from chorismate: step 4/5. This Burkholderia multivorans (strain ATCC 17616 / 249) protein is Indole-3-glycerol phosphate synthase.